Here is a 682-residue protein sequence, read N- to C-terminus: Iron-phytosiderophore transporter yellow stripe 1 (682 aa).

The segment at 1-36 (MDLARRGGAAGADDEGEIERHEPAPEDMESDPAAAR) is disordered. 15 helical membrane-spanning segments follow: residues 56 to 76 (GVVAALLIGFMYSVIVMKIAL), 79 to 99 (GLVPTLNVSAALMAFLALRGW), 124 to 144 (CAVACYTIAFGGGFGSTLLGL), 167 to 187 (GFGWMAGFVAAISFAGLLSLI), 236 to 256 (LSFVWSFFQWFYTGGEVCGFV), 288 to 308 (LVNISTLLGAILSWGILWPLI), 334 to 354 (FLCIALIMGDGTYHFFKVFGV), 396 to 416 (FPAWAAYAGYAALTVVSAVII), 428 to 448 (VIVAYVLAPLLGFANSYGTGL), 460 to 480 (IALFIFAAWAGRDNGVIAGLA), 514 to 534 (VAQFIGTAMGCVVAPLTFLLF), 549 to 569 (APYGLIYRNMAILGVEGFSVL), 574 to 594 (LALSAGFFAFAFVFSVARDVL), 612 to 632 (FLVGGSFAIDMCVGSLAVFVW), and 640 to 660 (AVFMVPAVASGLICGDGIWTF).

It belongs to the YSL (TC 2.A.67.2) family. As to expression, expressed in roots of young maize seedlings. Not detected in leaves of iron-sufficient plants, but accumulates in roots and leaves of iron-deficient plants.

Its subcellular location is the membrane. Functionally, involved in Fe(3+) uptake. Acts as a proton-coupled symporter for phytosiderophore- and nicotianamine-chelated metals. Capable of transporting either Fe(2+)-nicotianamine or Fe(3+)-phytosiderophore. May transport iron, zinc, nickel, copper and, at a lower rate, manganese and cadmium. This Zea mays (Maize) protein is Iron-phytosiderophore transporter yellow stripe 1 (YS1).